The sequence spans 465 residues: Iron transporter FTH1 (465 aa).

The Vacuolar segment spans residues 1-11; sequence MAFEDYFSFQI. The helical transmembrane segment at 12–32 threads the bilayer; that stretch reads FFIFLRESLEIVVIVSILLTI. The Cytoplasmic segment spans residues 33–135; sequence VKQGLSVEDD…LYQKLKIQIL (103 aa). The interval 44–66 is disordered; that stretch reads PFEGSSSSAGLPSPNTNTNADST. The segment covering 46 to 66 has biased composition (polar residues); that stretch reads EGSSSSAGLPSPNTNTNADST. The helical transmembrane segment at 136-156 threads the bilayer; sequence AGGAFGLLLCMLIGGAFVSIF. The Vacuolar portion of the chain corresponds to 157 to 170; the sequence is YHIGTDLWTLSEHY. The chain crosses the membrane as a helical span at residues 171-191; the sequence is YEGVLSLVASVIISVMGLFFL. Topologically, residues 192-289 are cytoplasmic; the sequence is RMGKLREKFR…FFFRYSSSLS (98 aa). A helical membrane pass occupies residues 290 to 310; the sequence is LKICLVVATCFLYLIAAGLFS. Residues 311-358 are Vacuolar-facing; it reads KGVWQLELQDYVNKCNGQDMSEVGNGPGSYDISRSVWHVNCCNGEKDG. A helical transmembrane segment spans residues 359 to 379; it reads GWMIFTAIFGWTNSATVGSVI. Topologically, residues 380-465 are cytoplasmic; the sequence is SYNAYWLVLI…LIIDSSGSAN (86 aa). The disordered stretch occupies residues 433 to 465; that stretch reads TSELNSSTSEPDSQRRSKDSSVPLIIDSSGSAN. Phosphoserine is present on residues S449 and S453.

Belongs to the oxidase-dependent Fe transporter (OFeT) (TC 9.A.10.1) family. Interacts with FET5.

The protein resides in the vacuole membrane. Its function is as follows. High affinity iron transporter probably involved in transport of intravacuolar stores of iron. This Saccharomyces cerevisiae (strain ATCC 204508 / S288c) (Baker's yeast) protein is Iron transporter FTH1 (FTH1).